The following is a 72-amino-acid chain: Translation initiation factor IF-1 1 (72 aa).

In terms of domain architecture, S1-like spans 1-72; that stretch reads MAKDDVIQMQ…SRARIVFRAK (72 aa).

This sequence belongs to the IF-1 family. As to quaternary structure, component of the 30S ribosomal translation pre-initiation complex which assembles on the 30S ribosome in the order IF-2 and IF-3, IF-1 and N-formylmethionyl-tRNA(fMet); mRNA recruitment can occur at any time during PIC assembly.

It localises to the cytoplasm. One of the essential components for the initiation of protein synthesis. Stabilizes the binding of IF-2 and IF-3 on the 30S subunit to which N-formylmethionyl-tRNA(fMet) subsequently binds. Helps modulate mRNA selection, yielding the 30S pre-initiation complex (PIC). Upon addition of the 50S ribosomal subunit IF-1, IF-2 and IF-3 are released leaving the mature 70S translation initiation complex. The polypeptide is Translation initiation factor IF-1 1 (Ralstonia nicotianae (strain ATCC BAA-1114 / GMI1000) (Ralstonia solanacearum)).